The sequence spans 213 residues: 3,4-dihydroxy-2-butanone 4-phosphate synthase (213 aa).

D-ribulose 5-phosphate-binding positions include 37 to 38 (RE), Asp42, 150 to 154 (RAGHT), and Glu174. Glu38 lines the Mg(2+) pocket. His153 is a Mg(2+) binding site.

The protein belongs to the DHBP synthase family. Homodimer. Requires Mg(2+) as cofactor. Mn(2+) is required as a cofactor.

The enzyme catalyses D-ribulose 5-phosphate = (2S)-2-hydroxy-3-oxobutyl phosphate + formate + H(+). It participates in cofactor biosynthesis; riboflavin biosynthesis; 2-hydroxy-3-oxobutyl phosphate from D-ribulose 5-phosphate: step 1/1. In terms of biological role, catalyzes the conversion of D-ribulose 5-phosphate to formate and 3,4-dihydroxy-2-butanone 4-phosphate. The chain is 3,4-dihydroxy-2-butanone 4-phosphate synthase from Buchnera aphidicola subsp. Schizaphis graminum (strain Sg).